Consider the following 232-residue polypeptide: C4-dicarboxylate TRAP transporter small permease protein DctQ (232 aa).

4 consecutive transmembrane segments (helical) span residues 30 to 50 (EFLI…NVIM), 58 to 78 (ILWA…VGAS), 103 to 123 (LYAL…LIGS), and 167 to 187 (FIPY…FLQI).

The protein belongs to the TRAP transporter small permease family. In terms of assembly, the complex comprises the extracytoplasmic solute receptor protein DctP, and the two transmembrane proteins DctQ and DctM.

It localises to the cell inner membrane. Its function is as follows. Part of the tripartite ATP-independent periplasmic (TRAP) transport system DctPQM involved in C4-dicarboxylates uptake. This Vibrio cholerae serotype O1 (strain ATCC 39315 / El Tor Inaba N16961) protein is C4-dicarboxylate TRAP transporter small permease protein DctQ.